The sequence spans 72 residues: Translation initiation factor IF-1 (72 aa).

The 72-residue stretch at 1–72 (MAKEDTLEFP…SKGRINYRFK (72 aa)) folds into the S1-like domain.

This sequence belongs to the IF-1 family. Component of the 30S ribosomal translation pre-initiation complex which assembles on the 30S ribosome in the order IF-2 and IF-3, IF-1 and N-formylmethionyl-tRNA(fMet); mRNA recruitment can occur at any time during PIC assembly.

The protein localises to the cytoplasm. One of the essential components for the initiation of protein synthesis. Stabilizes the binding of IF-2 and IF-3 on the 30S subunit to which N-formylmethionyl-tRNA(fMet) subsequently binds. Helps modulate mRNA selection, yielding the 30S pre-initiation complex (PIC). Upon addition of the 50S ribosomal subunit IF-1, IF-2 and IF-3 are released leaving the mature 70S translation initiation complex. In Cereibacter sphaeroides (strain ATCC 17029 / ATH 2.4.9) (Rhodobacter sphaeroides), this protein is Translation initiation factor IF-1.